Consider the following 120-residue polypeptide: Large ribosomal subunit protein uL18 (120 aa).

It belongs to the universal ribosomal protein uL18 family. As to quaternary structure, part of the 50S ribosomal subunit; part of the 5S rRNA/L5/L18/L25 subcomplex. Contacts the 5S and 23S rRNAs.

Functionally, this is one of the proteins that bind and probably mediate the attachment of the 5S RNA into the large ribosomal subunit, where it forms part of the central protuberance. This Picosynechococcus sp. (strain ATCC 27264 / PCC 7002 / PR-6) (Agmenellum quadruplicatum) protein is Large ribosomal subunit protein uL18.